The chain runs to 210 residues: Homeobox protein Rhox5 (210 aa).

Positions methionine 1–leucine 119 are disordered. The segment covering glycine 17–alanine 30 has biased composition (basic and acidic residues). Gly residues predominate over residues glycine 47–glycine 79. A DNA-binding region (homeobox; atypical) is located at residues methionine 117–arginine 175.

The protein localises to the nucleus. Its function is as follows. Transcription factor required for differentiation of embryonic stem cells (ESCs) into primordial germ cells. The polypeptide is Homeobox protein Rhox5 (Rhox5) (Mus musculus (Mouse)).